The sequence spans 175 residues: uncharacterized protein (175 aa).

Over residues 35–56 (LIENSNYDNNNINNNNNNNNTD) the composition is skewed to low complexity. Residues 35–70 (LIENSNYDNNNINNNNNNNNTDNDNDNNNDNEPFYN) form a disordered region. Helical transmembrane passes span 106 to 126 (ILSF…FFNY) and 132 to 152 (YFII…KSIF).

The protein localises to the membrane. This is an uncharacterized protein from Dictyostelium discoideum (Social amoeba).